Here is a 154-residue protein sequence, read N- to C-terminus: Large ribosomal subunit protein uL22 (154 aa).

This sequence belongs to the universal ribosomal protein uL22 family. In terms of assembly, part of the 50S ribosomal subunit.

Functionally, this protein binds specifically to 23S rRNA. It makes multiple contacts with different domains of the 23S rRNA in the assembled 50S subunit and ribosome. Its function is as follows. The globular domain of the protein is located near the polypeptide exit tunnel on the outside of the subunit, while an extended beta-hairpin is found that lines the wall of the exit tunnel in the center of the 70S ribosome. The chain is Large ribosomal subunit protein uL22 from Methanosphaera stadtmanae (strain ATCC 43021 / DSM 3091 / JCM 11832 / MCB-3).